Here is a 139-residue protein sequence, read N- to C-terminus: Nucleoside diphosphate kinase (139 aa).

The ATP site is built by lysine 10, phenylalanine 58, arginine 86, threonine 92, arginine 104, and asparagine 114. Histidine 117 (pros-phosphohistidine intermediate) is an active-site residue.

This sequence belongs to the NDK family. In terms of assembly, homotetramer. Requires Mg(2+) as cofactor.

The protein resides in the cytoplasm. It carries out the reaction a 2'-deoxyribonucleoside 5'-diphosphate + ATP = a 2'-deoxyribonucleoside 5'-triphosphate + ADP. The enzyme catalyses a ribonucleoside 5'-diphosphate + ATP = a ribonucleoside 5'-triphosphate + ADP. Functionally, major role in the synthesis of nucleoside triphosphates other than ATP. The ATP gamma phosphate is transferred to the NDP beta phosphate via a ping-pong mechanism, using a phosphorylated active-site intermediate. The chain is Nucleoside diphosphate kinase from Rhodococcus opacus (strain B4).